We begin with the raw amino-acid sequence, 294 residues long: Glyceraldehyde-3-phosphate dehydrogenase (294 aa).

NAD(+) is bound by residues Asp19, Lys63, and Thr105. D-glyceraldehyde 3-phosphate contacts are provided by residues 134-136 (SCT), Thr165, 194-195 (TG), and Arg217. The active-site Nucleophile is Cys135.

This sequence belongs to the glyceraldehyde-3-phosphate dehydrogenase family. Homotetramer.

The protein localises to the cytoplasm. The catalysed reaction is D-glyceraldehyde 3-phosphate + phosphate + NAD(+) = (2R)-3-phospho-glyceroyl phosphate + NADH + H(+). It participates in carbohydrate degradation; glycolysis; pyruvate from D-glyceraldehyde 3-phosphate: step 1/5. Catalyzes the oxidative phosphorylation of glyceraldehyde 3-phosphate (G3P) to 1,3-bisphosphoglycerate (BPG) using the cofactor NAD. The first reaction step involves the formation of a hemiacetal intermediate between G3P and a cysteine residue, and this hemiacetal intermediate is then oxidized to a thioester, with concomitant reduction of NAD to NADH. The reduced NADH is then exchanged with the second NAD, and the thioester is attacked by a nucleophilic inorganic phosphate to produce BPG. The chain is Glyceraldehyde-3-phosphate dehydrogenase (gap) from Klebsiella aerogenes (Enterobacter aerogenes).